The primary structure comprises 501 residues: MLO-like protein 5 (501 aa).

Residues 1 to 22 (MAGGGGGSTSGEGPRELDQTPT) are Extracellular-facing. Residues 23–43 (WAVSTVCGVIILISIVLELMI) form a helical membrane-spanning segment. Residues 44 to 68 (HKIGEVFTERRKKALYEALQKIKNE) are Cytoplasmic-facing. Residues 69–89 (LMVLGFISLLLTFGQNYIASL) form a helical membrane-spanning segment. The Extracellular segment spans residues 90 to 151 (CVASRYGHAM…ISLNALHQVH (62 aa)). The chain crosses the membrane as a helical span at residues 152 to 172 (IFIFFLAVFHVIYSAITMMLG). Residues 173-273 (RAKIRGWKVW…IKRSLEDDFK (101 aa)) are Cytoplasmic-facing. A helical membrane pass occupies residues 274 to 294 (VVVGISPELWAFVMLFLLFDV). Position 295 (histidine 295) is a topological domain, extracellular. A helical membrane pass occupies residues 296-316 (GWYVTAVITMIPPLLTLAIGT). Residues 317–359 (KLQAIISDMALEIQERHAVIQGMPLVNVSDRHFWFSRPALVLH) are Cytoplasmic-facing. A helical membrane pass occupies residues 360-380 (IIHFILFQNAFEITYFFWIWY). Residues 381–391 (EFGLRSCFHHH) lie on the Extracellular side of the membrane. The chain crosses the membrane as a helical span at residues 392 to 412 (FALIIIRVALGVGVQFLCSYI). Residues 413-501 (TLPLYALVTQ…SQSRDLLSGP (89 aa)) are Cytoplasmic-facing. Residues 443 to 501 (WHKNAKKKSETPGQTQPPLPNLRPKTGGDIESASPANITASVDVKESDQSQSRDLLSGP) form a disordered region. Residues 450–471 (KSETPGQTQPPLPNLRPKTGGD) form a calmodulin-binding region. A compositionally biased stretch (polar residues) spans 491-501 (QSQSRDLLSGP).

Belongs to the MLO family.

The protein localises to the membrane. Functionally, may be involved in modulation of pathogen defense and leaf cell death. Activity seems to be regulated by Ca(2+)-dependent calmodulin binding and seems not to require heterotrimeric G proteins. The polypeptide is MLO-like protein 5 (MLO5) (Arabidopsis thaliana (Mouse-ear cress)).